A 124-amino-acid chain; its full sequence is Small ribosomal subunit protein uS12 (124 aa).

3-methylthioaspartic acid is present on Asp-89.

This sequence belongs to the universal ribosomal protein uS12 family. Part of the 30S ribosomal subunit. Contacts proteins S8 and S17. May interact with IF1 in the 30S initiation complex.

Functionally, with S4 and S5 plays an important role in translational accuracy. Interacts with and stabilizes bases of the 16S rRNA that are involved in tRNA selection in the A site and with the mRNA backbone. Located at the interface of the 30S and 50S subunits, it traverses the body of the 30S subunit contacting proteins on the other side and probably holding the rRNA structure together. The combined cluster of proteins S8, S12 and S17 appears to hold together the shoulder and platform of the 30S subunit. The sequence is that of Small ribosomal subunit protein uS12 from Koribacter versatilis (strain Ellin345).